Here is a 544-residue protein sequence, read N- to C-terminus: CTP synthase (544 aa).

Residues 1–266 form an amidoligase domain region; the sequence is MSTKFIFVTG…DYFVCRRFHL (266 aa). Position 14 (serine 14) interacts with CTP. UTP is bound at residue serine 14. Residues 15-20 and aspartate 72 each bind ATP; that span reads SLGKGI. 2 residues coordinate Mg(2+): aspartate 72 and glutamate 140. CTP is bound by residues 147–149, 187–192, and lysine 223; these read DIE and KTKPTQ. UTP-binding positions include 187 to 192 and lysine 223; that span reads KTKPTQ. Residues 291-542 enclose the Glutamine amidotransferase type-1 domain; it reads TIGMVGKYIE…VAAAHIHQKA (252 aa). Glycine 352 serves as a coordination point for L-glutamine. Cysteine 379 functions as the Nucleophile; for glutamine hydrolysis in the catalytic mechanism. L-glutamine contacts are provided by residues 380-383, glutamate 403, and arginine 470; that span reads LGMQ. Residues histidine 515 and glutamate 517 contribute to the active site.

Belongs to the CTP synthase family. In terms of assembly, homotetramer.

The enzyme catalyses UTP + L-glutamine + ATP + H2O = CTP + L-glutamate + ADP + phosphate + 2 H(+). It carries out the reaction L-glutamine + H2O = L-glutamate + NH4(+). It catalyses the reaction UTP + NH4(+) + ATP = CTP + ADP + phosphate + 2 H(+). Its pathway is pyrimidine metabolism; CTP biosynthesis via de novo pathway; CTP from UDP: step 2/2. Its activity is regulated as follows. Allosterically activated by GTP, when glutamine is the substrate; GTP has no effect on the reaction when ammonia is the substrate. The allosteric effector GTP functions by stabilizing the protein conformation that binds the tetrahedral intermediate(s) formed during glutamine hydrolysis. Inhibited by the product CTP, via allosteric rather than competitive inhibition. Functionally, catalyzes the ATP-dependent amination of UTP to CTP with either L-glutamine or ammonia as the source of nitrogen. Regulates intracellular CTP levels through interactions with the four ribonucleotide triphosphates. This is CTP synthase from Pseudoalteromonas translucida (strain TAC 125).